A 502-amino-acid polypeptide reads, in one-letter code: MNLRPEEISQIIKNEIERYEDKLEVVDVGTVIQVGDGVARVHGLENAMAGELLAFPNEVYGMVLNLEEDNVGCVLLGYDDDIVEGDIVRCTGRIVEVPVGEAMIGRVVNALGFPVDGKGPIVTDHRRPVEVKAAGVIERESVNQPIQTGYKAIDSMIPIGRGQRELIIGDRQTGKTALAIDTIINQKGEDVICIYVAIGQKDSTVAQIVGQLEENNAMDYTIIVSAGAAQLAPLQYIAPYSGVTMAEYFMNEQQKDVLIIYDDLSKHAVAYRAMSLILRRPPGREAYPGDVFYLHSRLLERAAKLKAGGSITALPIIETQAGDVSAYIPTNVISITDGQIFLEAELFRSGIRPAVNPGISVSRVGGSAQIKSMKKVAGPLRIEYAQYRELASFAQFGSDLDDETKAQLAKGERIVEILKQDQYDPMNVEDQVLILYAATNGFLLDIEVKDIREFEKGLIKFAQKKYPEIMTKVKGKDGLSDEVVAAFAECIEAYKKVFSKSV.

169-176 (GDRQTGKT) serves as a coordination point for ATP.

This sequence belongs to the ATPase alpha/beta chains family. F-type ATPases have 2 components, CF(1) - the catalytic core - and CF(0) - the membrane proton channel. CF(1) has five subunits: alpha(3), beta(3), gamma(1), delta(1), epsilon(1). CF(0) has three main subunits: a, b and c.

The protein localises to the cell membrane. It catalyses the reaction 4 Na(+)(in) + ATP + H2O = 4 Na(+)(out) + ADP + phosphate + H(+). Its activity is regulated as follows. Inhibited by nitrate. Its function is as follows. Produces ATP from ADP in the presence of a sodium ion gradient across the membrane. The alpha chain is a regulatory subunit. The sequence is that of ATP synthase subunit alpha, sodium ion specific from Acetobacterium woodii (strain ATCC 29683 / DSM 1030 / JCM 2381 / KCTC 1655 / WB1).